Consider the following 149-residue polypeptide: Transcriptional repressor NrdR (149 aa).

The segment at 3-34 (CPFCAAEETKVVDSRLAADGYQIRRRRECTSC) is a zinc-finger region. Positions 49–139 (PYVIKNNGNR…VYLSFDDIEE (91 aa)) constitute an ATP-cone domain.

The protein belongs to the NrdR family. It depends on Zn(2+) as a cofactor.

Its function is as follows. Negatively regulates transcription of bacterial ribonucleotide reductase nrd genes and operons by binding to NrdR-boxes. In Actinobacillus pleuropneumoniae serotype 5b (strain L20), this protein is Transcriptional repressor NrdR.